A 65-amino-acid chain; its full sequence is U11-theraphotoxin-Cg1b (65 aa).

An N-terminal signal peptide occupies residues Met1 to Ala21. Residues Thr22–Arg29 constitute a propeptide that is removed on maturation. Cystine bridges form between Cys31–Cys45, Cys38–Cys50, and Cys44–Cys57.

This sequence belongs to the neurotoxin 10 (Hwtx-1) family. 32 (Jztx-16) subfamily. Expressed by the venom gland.

Its subcellular location is the secreted. Its function is as follows. Probable ion channel inhibitor. This chain is U11-theraphotoxin-Cg1b, found in Chilobrachys guangxiensis (Chinese earth tiger tarantula).